The chain runs to 326 residues: Protein-arginine N-acetylglucosaminyltransferase NleB2 (326 aa).

Residues 45-47 (QWF), Tyr-69, and 216-219 (YLDM) each bind UDP-N-acetyl-alpha-D-glucosamine. Residues 218–220 (DMD) carry the DXD motif motif. Residue Asp-220 participates in Mn(2+) binding. Glu-250 functions as the Proton acceptor in the catalytic mechanism. 2 residues coordinate Mn(2+): Asn-317 and Ser-319. UDP-N-acetyl-alpha-D-glucosamine contacts are provided by residues Ser-319 and 324–326 (SSW).

It belongs to the glycosyltransferase NleB family. Requires Mn(2+) as cofactor.

It is found in the secreted. It localises to the host cell. The catalysed reaction is L-arginyl-[protein] + UDP-N-acetyl-alpha-D-glucosamine = N(omega)-(N-acetyl-beta-D-glucosaminyl)-L-arginyl-[protein] + UDP + H(+). Protein-arginine N-acetylglucosaminyltransferase effector that catalyzes the transfer of a single N-acetylglucosamine (GlcNAc) to a conserved arginine residue of host target proteins. In contrast to NleB1, not able to disrupt TNF signaling in infected cells. Shows a lower enzymatic activity than NleB1. The sequence is that of Protein-arginine N-acetylglucosaminyltransferase NleB2 from Escherichia coli O127:H6 (strain E2348/69 / EPEC).